Reading from the N-terminus, the 475-residue chain is UDP-N-acetylmuramate--L-alanine ligase (475 aa).

125–131 (GTHGKTT) is a binding site for ATP.

Belongs to the MurCDEF family.

The protein resides in the cytoplasm. The catalysed reaction is UDP-N-acetyl-alpha-D-muramate + L-alanine + ATP = UDP-N-acetyl-alpha-D-muramoyl-L-alanine + ADP + phosphate + H(+). The protein operates within cell wall biogenesis; peptidoglycan biosynthesis. In terms of biological role, cell wall formation. This is UDP-N-acetylmuramate--L-alanine ligase from Haemophilus influenzae (strain PittGG).